The chain runs to 688 residues: MIOREX complex component 1 (688 aa).

A disordered region spans residues 1–24 (MGLKITKGQLRTKDLNQSSSKSSQ). Residues 1-46 (MGLKITKGQLRTKDLNQSSSKSSQSSRIGVDTCIFTRMLPRINTAI) constitute a mitochondrion transit peptide.

In terms of assembly, associates with the mitochondrial ribosome.

It localises to the mitochondrion. Its function is as follows. Component of MIOREX complexes, large expressome-like assemblies of ribosomes with factors involved in all the steps of post-transcriptional gene expression. The sequence is that of MIOREX complex component 1 from Saccharomyces cerevisiae (strain ATCC 204508 / S288c) (Baker's yeast).